The sequence spans 296 residues: Ribosome biogenesis GTPase A (296 aa).

The 165-residue stretch at 14–178 (RRQVTEKLKL…LLDTPGILWP (165 aa)) folds into the CP-type G domain. Residues 58-61 (NKAD), 130-135 (NVGKST), and Gly-174 contribute to the GTP site.

It belongs to the TRAFAC class YlqF/YawG GTPase family. MTG1 subfamily. In terms of assembly, interacts with ctc. Interacts with the immature 50S ribosome subunit. 2 molecules of rbgA bind to one 50S subunit.

The protein localises to the cytoplasm. Essential protein that is required for a late step of 50S ribosomal subunit assembly. Has GTPase activity that is stimulated by interaction with the immature 50S ribosome subunit. Binds to the 23S rRNA. Required for the association of ribosomal proteins rplP and rpmA with the large subunit. In Bacillus cereus (strain ATCC 14579 / DSM 31 / CCUG 7414 / JCM 2152 / NBRC 15305 / NCIMB 9373 / NCTC 2599 / NRRL B-3711), this protein is Ribosome biogenesis GTPase A.